We begin with the raw amino-acid sequence, 203 residues long: Excretory canal abnormal exc-13 (203 aa).

Residues 1–20 form the signal peptide; it reads MIGFLKFALIGTVLLGVANG. Residues Asn32, Asn84, and Asn188 are each glycosylated (N-linked (GlcNAc...) asparagine).

This sequence belongs to the UPF0376 family.

It localises to the secreted. This chain is Excretory canal abnormal exc-13, found in Caenorhabditis elegans.